The chain runs to 447 residues: NADH-ubiquinone oxidoreductase chain 4 (447 aa).

13 consecutive transmembrane segments (helical) span residues 28-48 (IFLA…FCDI), 56-76 (MISY…LMAS), 85-105 (YVNL…FTFS), 110-130 (FMFY…ILGW), 141-161 (IYLL…IFYI), 183-203 (FLYL…LVHL), 213-233 (PVSG…YGLL), 246-266 (FNYI…LICL), 273-293 (ALIA…LMTM), 301-321 (SYTL…LANI), 343-365 (SLSL…LNLL), 380-400 (LTMI…LYLF), and 409-431 (YSGV…LHWL).

Belongs to the complex I subunit 4 family.

It is found in the mitochondrion membrane. The catalysed reaction is a ubiquinone + NADH + 5 H(+)(in) = a ubiquinol + NAD(+) + 4 H(+)(out). Its function is as follows. Core subunit of the mitochondrial membrane respiratory chain NADH dehydrogenase (Complex I) that is believed to belong to the minimal assembly required for catalysis. Complex I functions in the transfer of electrons from NADH to the respiratory chain. The immediate electron acceptor for the enzyme is believed to be ubiquinone. In Aedes aegypti (Yellowfever mosquito), this protein is NADH-ubiquinone oxidoreductase chain 4.